Here is a 962-residue protein sequence, read N- to C-terminus: Phosphatidylinositol 3,4,5-trisphosphate 3-phosphatase and dual-specificity protein phosphatase daf-18 (962 aa).

Residues 1–37 are disordered; that stretch reads MVTPPPDVPSTSTRSMARDLQENPNRQPGEPRVSEPY. The 173-residue stretch at 58 to 230 folds into the Phosphatase tensin-type domain; sequence CRTEYQNIDL…YYYHKLRERE (173 aa). The active-site Phosphocysteine intermediate is the Cys169. One can recognise a C2 tensin-type domain in the interval 234–530; the sequence is LPLRMQLIGV…GMKLHVVLRC (297 aa). Disordered stretches follow at residues 382–416 and 689–731; these read DTSI…WQIV and IENT…RLPD. Over residues 392–403 the composition is skewed to basic and acidic residues; it reads RRNETPMRKIDP. Residues 692-704 are compositionally biased toward low complexity; sequence TGPSTSGSSAPGT. Positions 706 to 720 are enriched in basic and acidic residues; it reads KKTEASQSDKVKPAT.

This sequence belongs to the PTEN phosphatase protein family. In terms of assembly, interacts (via C-terminus) with vab-1 (via kinase domain); the interaction is independent of vab-1 kinase activity. Interacts with arr-1 and mpz-1; the interaction may inhibit daf-18. Interacts (via C-terminus) with daf-2 (via kinase domain). Phosphorylated by vab-1 on tyrosine residues which may promote daf-18 degradation. In terms of tissue distribution, expressed in embryo, larvae and in adult germline (at protein level). Expressed at equal levels in the 6 vulva precursor cells (VPCs) of L2 larvae and in the descendant cells of the induced VPCs (at protein level). Expressed in the uterus (at protein level). Expressed in the Z2/Z3 germline precursors, oocytes, several amphid neurons and weakly in the nerve cord (at protein level).

It is found in the perikaryon. The protein localises to the cell membrane. The protein resides in the cell projection. It localises to the axon. Its subcellular location is the dendrite. It is found in the cytoplasm. The protein localises to the nucleus. It carries out the reaction a 1,2-diacyl-sn-glycero-3-phospho-(1D-myo-inositol-3,4,5-trisphosphate) + H2O = a 1,2-diacyl-sn-glycero-3-phospho-(1D-myo-inositol-4,5-bisphosphate) + phosphate. The catalysed reaction is O-phospho-L-seryl-[protein] + H2O = L-seryl-[protein] + phosphate. The enzyme catalyses O-phospho-L-threonyl-[protein] + H2O = L-threonyl-[protein] + phosphate. It catalyses the reaction O-phospho-L-tyrosyl-[protein] + H2O = L-tyrosyl-[protein] + phosphate. It carries out the reaction 1,2-dioctanoyl-sn-glycero-3-phospho-(1D-myo-inositol-3,4,5-trisphosphate) + H2O = 1,2-dioctanoyl-sn-glycero-3-phospho-(1D-myo-inositol-4,5-bisphosphate) + phosphate. The catalysed reaction is 1,2-dihexadecanoyl-sn-glycero-3-phospho-(1D-myo-inositol-3,4,5-trisphosphate) + H2O = 1,2-dihexadecanoyl-sn-glycero-3-phospho-(1D-myo-inositol-4,5-bisphosphate) + phosphate. Its function is as follows. Acts as a dual-specificity protein phosphatase, dephosphorylating tyrosine-, serine- and threonine-phosphorylated proteins. Also acts as a lipid phosphatase, removing the phosphate in the D3 position of the inositol ring from phosphatidylinositol 3,4,5-trisphosphate. By dephosphorylating PtdIns(3,4,5)P3 antagonizes PtdIns(3,4,5)P3 production by age-1/PI3K and thus, negatively regulates daf-2-mediated processes including dauer formation, longevity, fat metabolism, chemotaxis towards salt, thermotolerance and axon guidance. Similarly, promotes apoptosis during embryonic development by suppressing the recruitment of the prosurvival kinases akt-1/2 to the plasma membrane. In addition, regulates Z2/Z3 germline precursor cell cycle by maintaining them arrested at the G2 stage and by controlling their growth during L1 diapause. After sperm depletion in larvae and adult hermaphrodites, promotes germline stem cell quiescence and oocyte accumulation. By dephosphorylating ephrin-like receptor vab-1 on tyrosine residues, negatively regulates oocyte maturation downstream of vab-1 and upstream of mpk-1, independently of daf-2. Plays a role in postembryonic muscle arm extensions. Required for neurite outgrowth during AIY interneuron embryonic development. Mainly independently of daf-2, negatively regulates vulva induction probably by inhibiting mpk-1 phosphorylation. Both lipid and protein phosphatase activities are required for the regulation of vulva induction. Plays a role in gonad and germline development following the L1 diapause. In Caenorhabditis elegans, this protein is Phosphatidylinositol 3,4,5-trisphosphate 3-phosphatase and dual-specificity protein phosphatase daf-18.